The following is a 656-amino-acid chain: Phosphoprotein 85 (656 aa).

Disordered regions lie at residues 1–174 (MSSR…EGDE) and 615–656 (NGNH…EYCC). A compositionally biased stretch (basic and acidic residues) spans 46-55 (SATEDLDRME). 2 stretches are compositionally biased toward low complexity: residues 59–70 (SPYSVSSDAPSS) and 140–160 (DNSS…RSTS). The span at 625 to 634 (SPPPPLPPRD) shows a compositional bias: pro residues. Basic and acidic residues predominate over residues 635–656 (YPQRDERDRHRRDRRDSGEYCC).

This sequence belongs to the herpesviridae pp85 family. Phosphorylated.

It localises to the virion tegument. The protein localises to the host cytoplasm. In Homo sapiens (Human), this protein is Phosphoprotein 85 (UL25).